The chain runs to 702 residues: Ribosomal RNA large subunit methyltransferase K/L (702 aa).

The THUMP domain maps to 43-154 (LVYQSLMWSR…KETASIALDL (112 aa)).

This sequence belongs to the methyltransferase superfamily. RlmKL family.

The protein resides in the cytoplasm. It carries out the reaction guanosine(2445) in 23S rRNA + S-adenosyl-L-methionine = N(2)-methylguanosine(2445) in 23S rRNA + S-adenosyl-L-homocysteine + H(+). It catalyses the reaction guanosine(2069) in 23S rRNA + S-adenosyl-L-methionine = N(2)-methylguanosine(2069) in 23S rRNA + S-adenosyl-L-homocysteine + H(+). In terms of biological role, specifically methylates the guanine in position 2445 (m2G2445) and the guanine in position 2069 (m7G2069) of 23S rRNA. This chain is Ribosomal RNA large subunit methyltransferase K/L, found in Escherichia coli (strain K12 / DH10B).